Consider the following 258-residue polypeptide: Imidazole glycerol phosphate synthase subunit HisF (258 aa).

Catalysis depends on residues aspartate 11 and aspartate 130.

The protein belongs to the HisA/HisF family. Heterodimer of HisH and HisF.

It localises to the cytoplasm. The catalysed reaction is 5-[(5-phospho-1-deoxy-D-ribulos-1-ylimino)methylamino]-1-(5-phospho-beta-D-ribosyl)imidazole-4-carboxamide + L-glutamine = D-erythro-1-(imidazol-4-yl)glycerol 3-phosphate + 5-amino-1-(5-phospho-beta-D-ribosyl)imidazole-4-carboxamide + L-glutamate + H(+). It participates in amino-acid biosynthesis; L-histidine biosynthesis; L-histidine from 5-phospho-alpha-D-ribose 1-diphosphate: step 5/9. Its function is as follows. IGPS catalyzes the conversion of PRFAR and glutamine to IGP, AICAR and glutamate. The HisF subunit catalyzes the cyclization activity that produces IGP and AICAR from PRFAR using the ammonia provided by the HisH subunit. This is Imidazole glycerol phosphate synthase subunit HisF from Yersinia pseudotuberculosis serotype IB (strain PB1/+).